We begin with the raw amino-acid sequence, 348 residues long: Holliday junction branch migration complex subunit RuvB (348 aa).

The segment covering 1 to 10 (MAIVSSNAGS) has biased composition (polar residues). Residues 1-41 (MAIVSSNAGSSAPRREPVLDAQPLPEESSGRPDDGLRPKRL) are disordered. The interval 13-197 (PRREPVLDAQ…FGLIQRLEFY (185 aa)) is large ATPase domain (RuvB-L). Over residues 28–41 (SSGRPDDGLRPKRL) the composition is skewed to basic and acidic residues. Residues Leu-36, Arg-37, Gly-78, Lys-81, Thr-82, Thr-83, Arg-187, Tyr-197, and Arg-234 each contribute to the ATP site. Thr-82 is a Mg(2+) binding site. Residues 198-269 (GQEDLEAIVS…LVSQALSLHR (72 aa)) are small ATPAse domain (RuvB-S). Positions 272 to 348 (HRGLDAGDRR…RAHLREQEVA (77 aa)) are head domain (RuvB-H). DNA is bound by residues Arg-327 and Arg-332.

The protein belongs to the RuvB family. As to quaternary structure, homohexamer. Forms an RuvA(8)-RuvB(12)-Holliday junction (HJ) complex. HJ DNA is sandwiched between 2 RuvA tetramers; dsDNA enters through RuvA and exits via RuvB. An RuvB hexamer assembles on each DNA strand where it exits the tetramer. Each RuvB hexamer is contacted by two RuvA subunits (via domain III) on 2 adjacent RuvB subunits; this complex drives branch migration. In the full resolvosome a probable DNA-RuvA(4)-RuvB(12)-RuvC(2) complex forms which resolves the HJ.

It localises to the cytoplasm. The enzyme catalyses ATP + H2O = ADP + phosphate + H(+). Its function is as follows. The RuvA-RuvB-RuvC complex processes Holliday junction (HJ) DNA during genetic recombination and DNA repair, while the RuvA-RuvB complex plays an important role in the rescue of blocked DNA replication forks via replication fork reversal (RFR). RuvA specifically binds to HJ cruciform DNA, conferring on it an open structure. The RuvB hexamer acts as an ATP-dependent pump, pulling dsDNA into and through the RuvAB complex. RuvB forms 2 homohexamers on either side of HJ DNA bound by 1 or 2 RuvA tetramers; 4 subunits per hexamer contact DNA at a time. Coordinated motions by a converter formed by DNA-disengaged RuvB subunits stimulates ATP hydrolysis and nucleotide exchange. Immobilization of the converter enables RuvB to convert the ATP-contained energy into a lever motion, pulling 2 nucleotides of DNA out of the RuvA tetramer per ATP hydrolyzed, thus driving DNA branch migration. The RuvB motors rotate together with the DNA substrate, which together with the progressing nucleotide cycle form the mechanistic basis for DNA recombination by continuous HJ branch migration. Branch migration allows RuvC to scan DNA until it finds its consensus sequence, where it cleaves and resolves cruciform DNA. In Parasynechococcus marenigrum (strain WH8102), this protein is Holliday junction branch migration complex subunit RuvB.